We begin with the raw amino-acid sequence, 837 residues long: SLIT and NTRK-like protein 4 (837 aa).

The signal sequence occupies residues 1 to 18; it reads MFLWLFLIVSALISSTNA. Topologically, residues 19-618 are extracellular; sequence DSDISVEICN…SPPGGPVPLS (600 aa). 6 LRR repeats span residues 60-81, 84-105, 108-129, 132-153, 156-177, and 179-200; these read NFYHLNFQNNFLNILYPNTFVN, HAVSLHLGNNKLQNIEGGAFLG, ALKQLHLNNNELKILRADTFLG, NLEYLQADYNLIKYIERGAFNK, KLKVLILNDNLISFLPDNIFRF, and SLTHLDIRGNRIQKLPYIGVLE. Asn81 carries N-linked (GlcNAc...) asparagine glycosylation. An LRRCT 1 domain is found at 213-264; that stretch reads NPWNCSCDLLPLKAWLENMPYNIYIGEAICETPSDLYGRLLKETNKQELCPM. Asn325 carries N-linked (GlcNAc...) asparagine glycosylation. One can recognise an LRRNT domain in the interval 333–375; sequence QTRVPPLTPCPVPCFCKTHPSDLGLSVNCQEKNIQSMSELTPK. LRR repeat units follow at residues 378–399, 402–423, 426–447, 450–471, 474–495, and 497–518; these read NAKKLHVNGNNIKDVDISDFTE, GLDLLHLGSNQITLIKGEVFHN, NLRRLYLNGNQIERLYPEIFSG, NLQYLYLEYNLIKEILAGTFDS, NLQLLYLNNNLLKSLPVYIFSG, and PLARLNLRNNKFMYLPVSGVLD. Residue Asn423 is glycosylated (N-linked (GlcNAc...) asparagine). The 52-residue stretch at 531–582 folds into the LRRCT 2 domain; sequence NPWDCTCDLVALKLWLEKLNDGIVVKELKCETPVQFANIELKSLKNEILCPK. A helical transmembrane segment spans residues 619 to 639; that stretch reads ILILSILVVLILTVFVAFCLL. Topologically, residues 640 to 837 are cytoplasmic; that stretch reads VFVLRRNKKP…LEEQTALNKI (198 aa).

The protein belongs to the SLITRK family. In terms of assembly, interacts (via LRR 1 and 2 repeats) with PTPRD (via extracellular domain). In terms of tissue distribution, in the adult, significant expression is detected only in the brain. Broadly expressed in embryonic brain with highest expression in subventricular zone, subplate, cortical plate, pyramidal cell layer of hippocampus, thalamus and hypothalamus.

The protein resides in the membrane. It localises to the cell membrane. It is involved in synaptogenesis and promotes synapse differentiation. Suppresses neurite outgrowth. In Mus musculus (Mouse), this protein is SLIT and NTRK-like protein 4 (Slitrk4).